The chain runs to 558 residues: Ribonuclease Y (558 aa).

A helical transmembrane segment spans residues 3 to 23 (VLSILLILVAVGVGIFVGRQF). The region spanning 248–311 (TTTTVELPSN…EIAKEALQRL (64 aa)) is the KH domain. Residues 374 to 467 (VLLHSKEVAY…VCAADALSAA (94 aa)) enclose the HD domain.

Belongs to the RNase Y family.

The protein localises to the cell membrane. Its function is as follows. Endoribonuclease that initiates mRNA decay. The protein is Ribonuclease Y of Aquifex aeolicus (strain VF5).